A 381-amino-acid polypeptide reads, in one-letter code: Cobalt-precorrin-5B C(1)-methyltransferase (381 aa).

It belongs to the CbiD family.

The enzyme catalyses Co-precorrin-5B + S-adenosyl-L-methionine = Co-precorrin-6A + S-adenosyl-L-homocysteine. It functions in the pathway cofactor biosynthesis; adenosylcobalamin biosynthesis; cob(II)yrinate a,c-diamide from sirohydrochlorin (anaerobic route): step 6/10. In terms of biological role, catalyzes the methylation of C-1 in cobalt-precorrin-5B to form cobalt-precorrin-6A. The chain is Cobalt-precorrin-5B C(1)-methyltransferase from Clostridium botulinum (strain Alaska E43 / Type E3).